The primary structure comprises 587 residues: A-type ATP synthase subunit A (587 aa).

234 to 241 (GPFGSGKT) lines the ATP pocket.

Belongs to the ATPase alpha/beta chains family. As to quaternary structure, the N-terminus (approximately residues 106-122) interacts with subunit H. Has multiple subunits with at least A(3), B(3), C, D, E(1 or 2), F, H(2), I and proteolipid K(x).

The protein resides in the cell membrane. It catalyses the reaction ATP + H2O + 4 H(+)(in) = ADP + phosphate + 5 H(+)(out). ATP hydrolysis is inhibited by N',N'-dicyclohexylcarbodiimide. Its function is as follows. Component of the A-type ATP synthase that produces ATP from ADP in the presence of a proton gradient across the membrane. The A chain is the catalytic subunit. Hydrolyzes ATP, GTP (86% of ATPase rate) and UTP (54% of ATPase rate), has very poor activity on CTP. The polypeptide is A-type ATP synthase subunit A (Methanocaldococcus jannaschii (strain ATCC 43067 / DSM 2661 / JAL-1 / JCM 10045 / NBRC 100440) (Methanococcus jannaschii)).